The sequence spans 230 residues: Inactive L-threonine 3-dehydrogenase, mitochondrial (230 aa).

The protein belongs to the NAD(P)-dependent epimerase/dehydratase family. As to expression, expressed in all tissues examined. Detected in most cell types examined, but not observed in endothelial cells, glioma cell lines and some leukemia cell lines.

The protein localises to the mitochondrion. The polypeptide is Inactive L-threonine 3-dehydrogenase, mitochondrial (Homo sapiens (Human)).